We begin with the raw amino-acid sequence, 149 residues long: Nucleoside diphosphate kinase (149 aa).

6 residues coordinate ATP: Lys-9, Phe-57, Arg-85, Thr-91, Arg-102, and Asn-112. The Pros-phosphohistidine intermediate role is filled by His-115.

This sequence belongs to the NDK family. As to quaternary structure, homotetramer. It depends on Mg(2+) as a cofactor.

The protein localises to the cytoplasm. It carries out the reaction a 2'-deoxyribonucleoside 5'-diphosphate + ATP = a 2'-deoxyribonucleoside 5'-triphosphate + ADP. The catalysed reaction is a ribonucleoside 5'-diphosphate + ATP = a ribonucleoside 5'-triphosphate + ADP. Functionally, major role in the synthesis of nucleoside triphosphates other than ATP. The ATP gamma phosphate is transferred to the NDP beta phosphate via a ping-pong mechanism, using a phosphorylated active-site intermediate. The protein is Nucleoside diphosphate kinase of Thermomicrobium roseum (strain ATCC 27502 / DSM 5159 / P-2).